Reading from the N-terminus, the 236-residue chain is 2,3,4,5-tetrahydropyridine-2,6-dicarboxylate N-acetyltransferase (236 aa).

It belongs to the transferase hexapeptide repeat family. DapH subfamily.

It catalyses the reaction (S)-2,3,4,5-tetrahydrodipicolinate + acetyl-CoA + H2O = L-2-acetamido-6-oxoheptanedioate + CoA. It participates in amino-acid biosynthesis; L-lysine biosynthesis via DAP pathway; LL-2,6-diaminopimelate from (S)-tetrahydrodipicolinate (acetylase route): step 1/3. Its function is as follows. Catalyzes the transfer of an acetyl group from acetyl-CoA to tetrahydrodipicolinate. The polypeptide is 2,3,4,5-tetrahydropyridine-2,6-dicarboxylate N-acetyltransferase (Lactobacillus acidophilus (strain ATCC 700396 / NCK56 / N2 / NCFM)).